Here is a 742-residue protein sequence, read N- to C-terminus: Probable serine/threonine-protein kinase PkwA (742 aa).

The Protein kinase domain occupies 16–266 (YRLVSRLGAG…TAELLAQLST (251 aa)). ATP-binding positions include 22 to 30 (LGAGGMGQV) and Lys44. Asp138 acts as the Proton acceptor in catalysis. The segment at 266–394 (TDHTGDDWPP…PWSPPRVQPP (129 aa)) is disordered. Residues 301–318 (EPPPPSHGPPRPSEPLPD) show a composition bias toward pro residues. Residues 343 to 356 (LEEKPIQVIHEPER) show a composition bias toward basic and acidic residues. Pro residues predominate over residues 377 to 392 (PRPAAPQPPWSPPRVQ). 7 WD repeats span residues 455–496 (ILTT…ELHT), 497–538 (LEGH…ERAV), 539–580 (FEGH…EHAV), 581–621 (LKGH…KERD), 622–663 (VLQA…ALHT), 664–705 (FEGH…EHTT), and 706–742 (LEGHTEPVHSVAFHPEGTTLASASEDGTIRIWPIATE).

It belongs to the protein kinase superfamily. Ser/Thr protein kinase family.

It carries out the reaction L-seryl-[protein] + ATP = O-phospho-L-seryl-[protein] + ADP + H(+). The enzyme catalyses L-threonyl-[protein] + ATP = O-phospho-L-threonyl-[protein] + ADP + H(+). In terms of biological role, may play a regulatory role during the complex growth cycle and in secondary metabolite production. The sequence is that of Probable serine/threonine-protein kinase PkwA (pkwA) from Thermomonospora curvata.